The chain runs to 262 residues: Small ribosomal subunit protein eS4 (262 aa).

In terms of domain architecture, S4 RNA-binding spans 42–104 (LPLILILRNR…TNEDFRLLYD (63 aa)).

The protein belongs to the eukaryotic ribosomal protein eS4 family.

The protein localises to the cytoplasm. The polypeptide is Small ribosomal subunit protein eS4 (RPS4) (Gossypium hirsutum (Upland cotton)).